Consider the following 102-residue polypeptide: MPSQKIRIRLKAFDHKLLDQSVGEIVDTAKRTGARVAGPIPLPTVINKYCVLRGPHVDKKSREQFEIRTHKRLIDILDPTQQTVDALMKLDLSAGVDVEIKL.

It belongs to the universal ribosomal protein uS10 family. As to quaternary structure, part of the 30S ribosomal subunit.

Its function is as follows. Involved in the binding of tRNA to the ribosomes. The sequence is that of Small ribosomal subunit protein uS10 from Geobacter sulfurreducens (strain ATCC 51573 / DSM 12127 / PCA).